We begin with the raw amino-acid sequence, 377 residues long: Dihydroorotase, mitochondrial (377 aa).

Zn(2+)-binding residues include His-44, His-46, Lys-130, His-168, and His-206. An N6-carboxylysine modification is found at Lys-130. Residue Ser-223 is modified to Phosphoserine. Asp-280 lines the Zn(2+) pocket.

Belongs to the metallo-dependent hydrolases superfamily. DHOase family. Class II DHOase subfamily. Zn(2+) is required as a cofactor.

The protein resides in the mitochondrion. It carries out the reaction (S)-dihydroorotate + H2O = N-carbamoyl-L-aspartate + H(+). It participates in pyrimidine metabolism; UMP biosynthesis via de novo pathway; (S)-dihydroorotate from bicarbonate: step 3/3. The chain is Dihydroorotase, mitochondrial (PYR4) from Arabidopsis thaliana (Mouse-ear cress).